The primary structure comprises 733 residues: FYVE, RhoGEF and PH domain-containing protein 3 (733 aa).

3 stretches are compositionally biased toward polar residues: residues 1–11 (MELGRSSSTPQ), 47–60 (HSSS…STRE), and 106–117 (ETASDSRVPQDN). A disordered region spans residues 1–134 (MELGRSSSTP…GVGEEPDPKV (134 aa)). The segment covering 118–129 (PQEEEDSGVGEE) has biased composition (acidic residues). Ser-124 carries the phosphoserine modification. A DH domain is found at 153–337 (KLLHIAQELL…STAADHSNAA (185 aa)). A PH 1 domain is found at 366 to 465 (ELIKEGSIQK…WIQVIQATVE (100 aa)). Residues 481 to 535 (CSQDEEPTLSPDQPVMSTSSVEPAGVADSNGGTPGIESRKSSSKTRRDKEKPGCK) form a disordered region. Basic and acidic residues predominate over residues 517–533 (ESRKSSSKTRRDKEKPG). An FYVE-type zinc finger spans residues 528-584 (DKEKPGCKSCGETFNSITKRRYRCKLCGEVICRKCSEFKAENSKQSRVCRECFLEEP). Residues Cys-534, Cys-537, Cys-551, Cys-554, Cys-559, Cys-562, Cys-576, and Cys-579 each contribute to the Zn(2+) site. Disordered stretches follow at residues 586–612 (VPPS…DPRP) and 712–733 (GDTA…TDTP). In terms of domain architecture, PH 2 spans 612–711 (PSLLCGTLNL…WLKALGTAVH (100 aa)). Thr-732 is subject to Phosphothreonine.

In terms of tissue distribution, detected in adult brain, spleen, lung and skeletal muscle. Detected in embryos from 7 dpc to 17 dpc.

The protein resides in the cytoplasm. Its subcellular location is the cytoskeleton. Functionally, promotes the formation of filopodia. May activate CDC42, a member of the Ras-like family of Rho- and Rac proteins, by exchanging bound GDP for free GTP. Plays a role in regulating the actin cytoskeleton and cell shape. In Mus musculus (Mouse), this protein is FYVE, RhoGEF and PH domain-containing protein 3 (Fgd3).